The chain runs to 357 residues: UPF0324 membrane protein BMEI1914 (357 aa).

The next 11 membrane-spanning stretches (helical) occupy residues 29–48 (NILPGLGLSVAITAAAMVLE), 58–77 (AWLEALVIAILLGTAVRSLA), 90–112 (SAKLLLEIAVVLLGASISASAVI), 117–136 (GLIFGIAAVVAVAITLSYGI), 149–171 (LVACGNSICGNSAIAAMAPVIGA), 181–203 (AFTAILGVIVVLTLPLLVPLLGL), 210–232 (ILAGLTVYAVPQVLAATAPVSLL), 242–261 (LVRVLMLGPVILVFALISGN), 268–290 (PGFFQLVPWFIIGFLAMMALHSL), 300–322 (AIQYASMLLTIISMAALGLGVDI), and 334–356 (LTAILSLIALCCISLGLIHMLGV).

This sequence belongs to the UPF0324 family.

It localises to the cell membrane. The sequence is that of UPF0324 membrane protein BMEI1914 from Brucella melitensis biotype 1 (strain ATCC 23456 / CCUG 17765 / NCTC 10094 / 16M).